An 897-amino-acid polypeptide reads, in one-letter code: MDWQPDEQGLQQVLQLLKDSQSPNTATQRIVQDKLKQLNQFPDFNNYLIFVLTRLKSEDEPTRSLSGLILKNNVKAHYQSFPPPVADFIKQECLNNIGDASSLIRATIGILITTIASKGELQMWPELLPQLCNLLNSEDYNTCEGAFGALQKICEDSSELLDSDALNRPLNIMIPKFLQFFKHCSPKIRSHAIACVNQFIMDRAQALMDNIDTFIEHLFALAVDDDPEVRKNVCRALVMLLEVRIDRLIPHMHSIIQYMLQRTQDHDENVALEACEFWLTLAEQPICKEVLASHLVQLIPILVNGMKYSEIDIILLKGDVEEDEAVPDSEQDIKPRFHKSRTVTLPHEAERPDGSEDAEDDDDDDALSDWNLRKCSAAALDVLANVFREELLPHLLPLLKGLLFHPEWVVKESGILVLGAIAEGCMQGMVPYLPELIPHLIQCLSDKKALVRSIACWTLSRYAHWVVSQPPDMHLKPLMTELLKRILDGNKRVQEAACSAFATLEEEACTELVPYLSYILDTLVFAFGKYQHKNLLILYDAIGTLADSVGHHLNQPEYIQKLMPPLIQKWNELKDEDKDLFPLLECLSSVATALQSGFLPYCEPVYQRCVTLVQKTLAQAMMYTQHPEQYEAPDKDFMIVALDLLSGLAEGLGGHVEQLVARSNIMTLLFQCMQDSMPEVRQSSFALLGDLTKACFIHVKPCIAEFMPILGTNLNPEFISVCNNATWAIGEICMQMGAEMQPYVQMVLNNLVEIINRPNTPKTLLENTGRLTSPSAIPAITIGRLGYVCPQEVAPMLQQFIRPWCTSLRNIRDNEEKDSAFRGICMMIGVNPGGVVQDFIFFCDAVASWVSPKDDLRDMFYKILHGFKDQVGEDNWQQFSEQFPPLLKERLAAFYGV.

HEAT repeat units lie at residues glycine 9 to lysine 36, phenylalanine 41 to glutamine 79, phenylalanine 88 to leucine 121, leucine 127 to aspartate 164, asparagine 171 to methionine 201, phenylalanine 214 to leucine 241, histidine 253 to threonine 280, valine 296 to valine 386, histidine 394 to alanine 422, proline 434 to arginine 461, leucine 475 to alanine 508, leucine 516 to valine 549, glutamate 557 to glutamine 595, glutamate 603 to glycine 654, isoleucine 665 to phenylalanine 696, alanine 704 to glycine 737, glutamine 745 to proline 790, glutamine 798 to asparagine 831, isoleucine 840 to valine 871, and aspartate 874 to phenylalanine 894. The Importin N-terminal domain occupies valine 31–aspartate 99. The tract at residues alanine 325–aspartate 364 is disordered. Positions serine 355–aspartate 364 are enriched in acidic residues. An N6-acetyllysine modification is found at lysine 862.

It belongs to the importin beta family. Importin beta-2 subfamily.

It is found in the cytoplasm. It localises to the nucleus. Probably functions in nuclear protein import as nuclear transport receptor. Serves as receptor for nuclear localization signals (NLS) in cargo substrates. Is thought to mediate docking of the importin/substrate complex to the nuclear pore complex (NPC) through binding to nucleoporin and the complex is subsequently translocated through the pore by an energy requiring, Ran-dependent mechanism. At the nucleoplasmic side of the NPC, Ran binds to the importin, the importin/substrate complex dissociates and importin is re-exported from the nucleus to the cytoplasm where GTP hydrolysis releases Ran. The directionality of nuclear import is thought to be conferred by an asymmetric distribution of the GTP- and GDP-bound forms of Ran between the cytoplasm and nucleus. This chain is Transportin-2 (TNPO2), found in Homo sapiens (Human).